The chain runs to 386 residues: Chaperone protein DnaJ (386 aa).

Residues 6–70 enclose the J domain; the sequence is DYYEVLGVDK…QKRAAYDQYG (65 aa). The segment at 141–223 adopts a CR-type zinc-finger fold; it reads GKDTEVSYKR…CHGTGHEKKT (83 aa). The Zn(2+) site is built by Cys-154, Cys-157, Cys-171, Cys-174, Cys-197, Cys-200, Cys-211, and Cys-214. CXXCXGXG motif repeat units follow at residues 154–161, 171–178, 197–204, and 211–218; these read CHTCGGNG, CHKCKGSG, CDVCHGTG, and CETCHGTG. The segment at 363 to 386 is disordered; it reads LTGQSTEEQQSEGFFDKMKDAFKK. Residues 364–374 are compositionally biased toward polar residues; the sequence is TGQSTEEQQSE. Residues 376–386 are compositionally biased toward basic and acidic residues; the sequence is FFDKMKDAFKK.

Belongs to the DnaJ family. As to quaternary structure, homodimer. Zn(2+) serves as cofactor.

The protein localises to the cytoplasm. Its function is as follows. Participates actively in the response to hyperosmotic and heat shock by preventing the aggregation of stress-denatured proteins and by disaggregating proteins, also in an autonomous, DnaK-independent fashion. Unfolded proteins bind initially to DnaJ; upon interaction with the DnaJ-bound protein, DnaK hydrolyzes its bound ATP, resulting in the formation of a stable complex. GrpE releases ADP from DnaK; ATP binding to DnaK triggers the release of the substrate protein, thus completing the reaction cycle. Several rounds of ATP-dependent interactions between DnaJ, DnaK and GrpE are required for fully efficient folding. Also involved, together with DnaK and GrpE, in the DNA replication of plasmids through activation of initiation proteins. This chain is Chaperone protein DnaJ, found in Tetragenococcus halophilus (Pediococcus halophilus).